Here is a 270-residue protein sequence, read N- to C-terminus: 4-hydroxy-tetrahydrodipicolinate reductase (270 aa).

Residues 8 to 13 (GALGRM), D34, 102 to 104 (GTT), and 128 to 131 (SQNY) each bind NAD(+). The active-site Proton donor/acceptor is H160. H161 contributes to the (S)-2,3,4,5-tetrahydrodipicolinate binding site. Residue K164 is the Proton donor of the active site. 170-171 (GT) contributes to the (S)-2,3,4,5-tetrahydrodipicolinate binding site.

Belongs to the DapB family.

The protein localises to the cytoplasm. It carries out the reaction (S)-2,3,4,5-tetrahydrodipicolinate + NAD(+) + H2O = (2S,4S)-4-hydroxy-2,3,4,5-tetrahydrodipicolinate + NADH + H(+). The enzyme catalyses (S)-2,3,4,5-tetrahydrodipicolinate + NADP(+) + H2O = (2S,4S)-4-hydroxy-2,3,4,5-tetrahydrodipicolinate + NADPH + H(+). It participates in amino-acid biosynthesis; L-lysine biosynthesis via DAP pathway; (S)-tetrahydrodipicolinate from L-aspartate: step 4/4. In terms of biological role, catalyzes the conversion of 4-hydroxy-tetrahydrodipicolinate (HTPA) to tetrahydrodipicolinate. The sequence is that of 4-hydroxy-tetrahydrodipicolinate reductase from Methanococcus vannielii (strain ATCC 35089 / DSM 1224 / JCM 13029 / OCM 148 / SB).